Here is a 287-residue protein sequence, read N- to C-terminus: MAIRTFRPYTPGTRTRVVTDFNEVTGRKPERSLVIAKHRLKGRNNRGVITCRHRGGGHKRQYRLVDFRRNKHGVPAKVAAIHYDPHRNARLALLFYKDGEKRYILAPAGISIGQEVLSGKDVPIEIGNALPLSSIPLGSSVHCVELYPGRGGQMVRCAGSSAQLMAKEGEYVALKLPSTEVRLVRGECYATLGEVGNSEIRNTSLGKAGRRRWLGRRPQVRGSVMNPCDHPHGGGEGRAPVGRAGPVTPWGKPALGLKTRKRNKPSNRFVLRKRRRVSKRSRGGRDS.

Positions 221-287 (RGSVMNPCDH…SKRSRGGRDS (67 aa)) are disordered. Basic residues predominate over residues 258–287 (KTRKRNKPSNRFVLRKRRRVSKRSRGGRDS).

Belongs to the universal ribosomal protein uL2 family. Part of the 50S ribosomal subunit. Forms a bridge to the 30S subunit in the 70S ribosome.

In terms of biological role, one of the primary rRNA binding proteins. Required for association of the 30S and 50S subunits to form the 70S ribosome, for tRNA binding and peptide bond formation. It has been suggested to have peptidyltransferase activity; this is somewhat controversial. Makes several contacts with the 16S rRNA in the 70S ribosome. The protein is Large ribosomal subunit protein uL2 of Prochlorococcus marinus (strain SARG / CCMP1375 / SS120).